The following is a 93-amino-acid chain: Small ribosomal subunit protein uS19 (93 aa).

The tract at residues F74–R93 is disordered. Positions H83–R93 are enriched in basic and acidic residues.

This sequence belongs to the universal ribosomal protein uS19 family.

Protein S19 forms a complex with S13 that binds strongly to the 16S ribosomal RNA. In Streptomyces griseus subsp. griseus (strain JCM 4626 / CBS 651.72 / NBRC 13350 / KCC S-0626 / ISP 5235), this protein is Small ribosomal subunit protein uS19.